The following is a 140-amino-acid chain: Large-conductance mechanosensitive channel 3 (140 aa).

A run of 3 helical transmembrane segments spans residues 8–28 (FISKGNVMDLAVGVIIGAAFG), 30–50 (IVTSLVDDVIMPIFGAIFGGL), and 81–101 (GSFITAVLNFLILAFIIFLMV).

It belongs to the MscL family. As to quaternary structure, homopentamer.

It localises to the cell inner membrane. Its function is as follows. Channel that opens in response to stretch forces in the membrane lipid bilayer. May participate in the regulation of osmotic pressure changes within the cell. The sequence is that of Large-conductance mechanosensitive channel 3 from Mesorhizobium japonicum (strain LMG 29417 / CECT 9101 / MAFF 303099) (Mesorhizobium loti (strain MAFF 303099)).